The sequence spans 319 residues: Acetyl-coenzyme A carboxylase carboxyl transferase subunit alpha (319 aa).

One can recognise a CoA carboxyltransferase C-terminal domain in the interval 39–293; the sequence is RLQKKSNDLT…KAVLEKQLHE (255 aa).

The protein belongs to the AccA family. In terms of assembly, acetyl-CoA carboxylase is a heterohexamer composed of biotin carboxyl carrier protein (AccB), biotin carboxylase (AccC) and two subunits each of ACCase subunit alpha (AccA) and ACCase subunit beta (AccD).

The protein resides in the cytoplasm. The enzyme catalyses N(6)-carboxybiotinyl-L-lysyl-[protein] + acetyl-CoA = N(6)-biotinyl-L-lysyl-[protein] + malonyl-CoA. It functions in the pathway lipid metabolism; malonyl-CoA biosynthesis; malonyl-CoA from acetyl-CoA: step 1/1. Component of the acetyl coenzyme A carboxylase (ACC) complex. First, biotin carboxylase catalyzes the carboxylation of biotin on its carrier protein (BCCP) and then the CO(2) group is transferred by the carboxyltransferase to acetyl-CoA to form malonyl-CoA. The protein is Acetyl-coenzyme A carboxylase carboxyl transferase subunit alpha of Neisseria meningitidis serogroup A / serotype 4A (strain DSM 15465 / Z2491).